Consider the following 476-residue polypeptide: Angiotensinogen (476 aa).

A signal peptide spans 1–24; it reads MAPAGMSLRATILCLLAWAGLAAG. N-linked (GlcNAc...) asparagine glycosylation is found at Asn-38, Asn-161, Asn-295, and Asn-319. Cys-42 and Cys-162 are disulfide-bonded.

Belongs to the serpin family. In terms of processing, in response to low blood pressure, the enzyme renin/REN cleaves angiotensinogen to produce angiotensin-1. Angiotensin-1 is a substrate of ACE (angiotensin converting enzyme) that removes a dipeptide to yield the physiologically active peptide angiotensin-2. Angiotensin-1 and angiotensin-2 can be further processed to generate angiotensin-3, angiotensin-4. Angiotensin 1-9 is cleaved from angiotensin-1 by ACE2 and can be further processed by ACE to produce angiotensin 1-7, angiotensin 1-5 and angiotensin 1-4. Angiotensin 1-7 has also been proposed to be cleaved from angiotensin-2 by ACE2 or from angiotensin-1 by MME (neprilysin). Post-translationally, the disulfide bond is labile. Angiotensinogen is present in the circulation in a near 40:60 ratio with the oxidized disulfide-bonded form, which preferentially interacts with receptor-bound renin.

The protein localises to the secreted. Its function is as follows. Essential component of the renin-angiotensin system (RAS), a potent regulator of blood pressure, body fluid and electrolyte homeostasis. Acts directly on vascular smooth muscle as a potent vasoconstrictor, affects cardiac contractility and heart rate through its action on the sympathetic nervous system, and alters renal sodium and water absorption through its ability to stimulate the zona glomerulosa cells of the adrenal cortex to synthesize and secrete aldosterone. Acts by binding to angiotensin receptors AGTR1 and AGTR2. Also binds the DEAR/FBXW7-AS1 receptor. Functionally, stimulates aldosterone release. In terms of biological role, is a ligand for the G-protein coupled receptor MAS1. Has vasodilator and antidiuretic effects. Has an antithrombotic effect that involves MAS1-mediated release of nitric oxide from platelets. This is Angiotensinogen (AGT) from Gorilla gorilla gorilla (Western lowland gorilla).